A 660-amino-acid chain; its full sequence is Acetyl-coenzyme A synthetase (660 aa).

CoA-binding positions include 197–200 (RGGK) and threonine 317. ATP-binding positions include 397 to 399 (GEP), 421 to 426 (DTFWQT), aspartate 512, and arginine 528. Serine 536 is a binding site for CoA. Arginine 539 contacts ATP. Mg(2+)-binding residues include valine 550 and valine 555. Lysine 625 is subject to N6-acetyllysine.

Belongs to the ATP-dependent AMP-binding enzyme family. Requires Mg(2+) as cofactor. Post-translationally, acetylated. Deacetylation by the SIR2-homolog deacetylase activates the enzyme.

It carries out the reaction acetate + ATP + CoA = acetyl-CoA + AMP + diphosphate. Functionally, catalyzes the conversion of acetate into acetyl-CoA (AcCoA), an essential intermediate at the junction of anabolic and catabolic pathways. AcsA undergoes a two-step reaction. In the first half reaction, AcsA combines acetate with ATP to form acetyl-adenylate (AcAMP) intermediate. In the second half reaction, it can then transfer the acetyl group from AcAMP to the sulfhydryl group of CoA, forming the product AcCoA. The chain is Acetyl-coenzyme A synthetase from Cupriavidus pinatubonensis (strain JMP 134 / LMG 1197) (Cupriavidus necator (strain JMP 134)).